The primary structure comprises 578 residues: Proline--tRNA ligase (578 aa).

This sequence belongs to the class-II aminoacyl-tRNA synthetase family. ProS type 1 subfamily. Homodimer.

The protein resides in the cytoplasm. The catalysed reaction is tRNA(Pro) + L-proline + ATP = L-prolyl-tRNA(Pro) + AMP + diphosphate. Catalyzes the attachment of proline to tRNA(Pro) in a two-step reaction: proline is first activated by ATP to form Pro-AMP and then transferred to the acceptor end of tRNA(Pro). As ProRS can inadvertently accommodate and process non-cognate amino acids such as alanine and cysteine, to avoid such errors it has two additional distinct editing activities against alanine. One activity is designated as 'pretransfer' editing and involves the tRNA(Pro)-independent hydrolysis of activated Ala-AMP. The other activity is designated 'posttransfer' editing and involves deacylation of mischarged Ala-tRNA(Pro). The misacylated Cys-tRNA(Pro) is not edited by ProRS. This Burkholderia cenocepacia (strain HI2424) protein is Proline--tRNA ligase.